A 189-amino-acid chain; its full sequence is Small ribosomal subunit protein uS7 (189 aa).

This sequence belongs to the universal ribosomal protein uS7 family. As to quaternary structure, part of the 30S ribosomal subunit.

In terms of biological role, one of the primary rRNA binding proteins, it binds directly to 16S rRNA where it nucleates assembly of the head domain of the 30S subunit. Is located at the subunit interface close to the decoding center. This chain is Small ribosomal subunit protein uS7, found in Methanosarcina acetivorans (strain ATCC 35395 / DSM 2834 / JCM 12185 / C2A).